Reading from the N-terminus, the 306-residue chain is uncharacterized protein (306 aa).

The next 9 helical transmembrane spans lie at 6–26, 37–57, 67–87, 91–111, 125–145, 148–168, 177–197, 213–233, and 251–271; these read VQIM…FPGI, HLAL…AVLT, IPAI…LLNI, TVSA…SAML, WLGS…AGDF, SMSG…YFVF, GFIP…LVFL, LSIV…LAYV, and ALAL…LSLL. 2 EamA domains span residues 17-140 and 160-285; these read GLWA…LIAF and FSES…FTYL.

This sequence belongs to the EamA transporter family.

The protein localises to the cell membrane. This is an uncharacterized protein from Bacillus subtilis (strain 168).